The chain runs to 118 residues: Holo-[acyl-carrier-protein] synthase (118 aa).

Mg(2+) is bound by residues Asp-8 and Glu-58.

Belongs to the P-Pant transferase superfamily. AcpS family. Requires Mg(2+) as cofactor.

The protein localises to the cytoplasm. The catalysed reaction is apo-[ACP] + CoA = holo-[ACP] + adenosine 3',5'-bisphosphate + H(+). Transfers the 4'-phosphopantetheine moiety from coenzyme A to a Ser of acyl-carrier-protein. The chain is Holo-[acyl-carrier-protein] synthase from Streptococcus pyogenes serotype M1.